Consider the following 428-residue polypeptide: Glutamyl-tRNA reductase (428 aa).

Substrate contacts are provided by residues 49–52 (TCNR), S109, 114–116 (EGQ), and Q120. The active-site Nucleophile is the C50. 189–194 (GAGKMA) contacts NADP(+).

Belongs to the glutamyl-tRNA reductase family. As to quaternary structure, homodimer.

The catalysed reaction is (S)-4-amino-5-oxopentanoate + tRNA(Glu) + NADP(+) = L-glutamyl-tRNA(Glu) + NADPH + H(+). It participates in porphyrin-containing compound metabolism; protoporphyrin-IX biosynthesis; 5-aminolevulinate from L-glutamyl-tRNA(Glu): step 1/2. It functions in the pathway porphyrin-containing compound metabolism; chlorophyll biosynthesis. Functionally, catalyzes the NADPH-dependent reduction of glutamyl-tRNA(Glu) to glutamate 1-semialdehyde (GSA). The polypeptide is Glutamyl-tRNA reductase (Rippkaea orientalis (strain PCC 8801 / RF-1) (Cyanothece sp. (strain PCC 8801))).